Consider the following 197-residue polypeptide: Nucleoid occlusion factor SlmA (197 aa).

Positions 7-67 (INRREHILQC…GLIDFIEESL (61 aa)) constitute an HTH tetR-type domain. Residues 30-49 (TTAKLAAEVGVSEAALYRHF) constitute a DNA-binding region (H-T-H motif).

Belongs to the nucleoid occlusion factor SlmA family. As to quaternary structure, homodimer. Interacts with FtsZ.

It localises to the cytoplasm. It is found in the nucleoid. Required for nucleoid occlusion (NO) phenomenon, which prevents Z-ring formation and cell division over the nucleoid. Acts as a DNA-associated cell division inhibitor that binds simultaneously chromosomal DNA and FtsZ, and disrupts the assembly of FtsZ polymers. SlmA-DNA-binding sequences (SBS) are dispersed on non-Ter regions of the chromosome, preventing FtsZ polymerization at these regions. This Shewanella loihica (strain ATCC BAA-1088 / PV-4) protein is Nucleoid occlusion factor SlmA.